A 160-amino-acid chain; its full sequence is Cytochrome c-type biogenesis protein CcmE (160 aa).

The Cytoplasmic portion of the chain corresponds to 1-8 (MNPRRKKR). Residues 9-29 (LGIILAIFFGISATVGLMVYA) form a helical; Signal-anchor for type II membrane protein membrane-spanning segment. Over 30–160 (LNQNMDLFYT…TTEQKEGNAQ (131 aa)) the chain is Periplasmic. 2 residues coordinate heme: His-128 and Tyr-132.

It belongs to the CcmE/CycJ family.

Its subcellular location is the cell inner membrane. Heme chaperone required for the biogenesis of c-type cytochromes. Transiently binds heme delivered by CcmC and transfers the heme to apo-cytochromes in a process facilitated by CcmF and CcmH. The chain is Cytochrome c-type biogenesis protein CcmE from Vibrio atlanticus (strain LGP32) (Vibrio splendidus (strain Mel32)).